Consider the following 243-residue polypeptide: uncharacterized protein (243 aa).

The protein belongs to the methyltransferase superfamily.

This is an uncharacterized protein from Mycobacterium tuberculosis (strain CDC 1551 / Oshkosh).